Here is a 222-residue protein sequence, read N- to C-terminus: Ras-related protein Rab-21 (222 aa).

Alanine 2 carries the post-translational modification N-acetylalanine. GTP contacts are provided by glycine 25, glycine 28, lysine 29, threonine 30, serine 31, asparagine 42, aspartate 43, histidine 45, threonine 47, and threonine 48. Threonine 30 serves as a coordination point for Mg(2+). Positions 40-53 match the Switch 1 motif; the sequence is KFNDKHITTLQASF. Residues threonine 48 and aspartate 71 each coordinate Mg(2+). The Switch 2 signature appears at 73–91; the sequence is AGQERFHALGPIYYRDSNG. GTP contacts are provided by glycine 74, asparagine 129, lysine 130, aspartate 132, alanine 160, and lysine 161. Residues cysteine 218 and cysteine 219 are each lipidated (S-geranylgeranyl cysteine). Cysteine 219 carries the post-translational modification Cysteine methyl ester. Residues 220 to 222 constitute a propeptide, removed in mature form; it reads SSG.

This sequence belongs to the small GTPase superfamily. Rab family. In terms of assembly, interacts with the cytoplasmic tail of integrins ITGA1, ITGA2, ITGA5, ITGA6, ITGA11 and ITGB1; this interaction is dependent upon its GDP/GTP cycle. Interacts with RABGEF1 (via VPS9 domain). Interacts with ANKRD27. Interacts (in GTP-bound form) with VAMP8 in response to starvation; the interaction probably regulates VAMP8 endolysosomal trafficking. Interacts (active GTP-bound form) with TMED10; the interaction is indirect and regulates TMED10 abundance and localization at the Golgi. Requires Mg(2+) as cofactor.

It localises to the endoplasmic reticulum membrane. The protein resides in the golgi apparatus. The protein localises to the trans-Golgi network. It is found in the golgi apparatus membrane. Its subcellular location is the early endosome membrane. It localises to the cytoplasmic vesicle membrane. The protein resides in the cleavage furrow. The protein localises to the cell projection. It is found in the neuron projection. It carries out the reaction GTP + H2O = GDP + phosphate + H(+). Regulated by guanine nucleotide exchange factors (GEFs) including ANKRD27 and RABGEF1, which promote the exchange of bound GDP for free GTP. Regulated by GTPase activating proteins (GAPs) which increase the GTP hydrolysis activity. Inhibited by GDP dissociation inhibitors (GDIs). Functionally, the small GTPases Rab are key regulators of intracellular membrane trafficking, from the formation of transport vesicles to their fusion with membranes. Rabs cycle between an inactive GDP-bound form and an active GTP-bound form that is able to recruit to membranes different sets of downstream effectors directly responsible for vesicle formation, movement, tethering and fusion. RAB21 is involved in membrane trafficking control. Regulates integrin internalization and recycling, but does not influence the traffic of endosomally translocated receptors in general. As a result, may regulate cell adhesion and migration. During the mitosis of adherent cells, controls the endosomal trafficking of integrins which is required for the successful completion of cytokinesis. Involved in neurite growth. Following SBF2/MTMT13-mediated activation in response to starvation-induced autophagy, binds to and regulates SNARE protein VAMP8 endolysosomal transport required for SNARE-mediated autophagosome-lysosome fusion. Modulates protein levels of the cargo receptors TMED2 and TMED10, and required for appropriate Golgi localization of TMED10. The polypeptide is Ras-related protein Rab-21 (RAB21) (Bos taurus (Bovine)).